Here is a 192-residue protein sequence, read N- to C-terminus: MDLLFDEFRAAHVPVEEMATHYIPEAARQIGAAWDSDRIGFAQVTIAISRLQELLHALQTLVTADSVGCANGATVLLIVPPGEQHTLGALIVAMELRRRGVSVRIVFAPGLSDLSRLMATTRFDAALITVGSMDRVEICAKLVKTLSSLTKGRMRVAIGGAIVSQRAEALARTGADLVTNDLSLVISEFSLV.

The 121-residue stretch at 72 to 192 (GATVLLIVPP…SLVISEFSLV (121 aa)) folds into the B12-binding domain.

This is an uncharacterized protein from Rhodobacter capsulatus (Rhodopseudomonas capsulata).